The chain runs to 473 residues: ATP synthase subunit beta (473 aa).

153–160 (GGAGVGKT) provides a ligand contact to ATP.

The protein belongs to the ATPase alpha/beta chains family. As to quaternary structure, F-type ATPases have 2 components, CF(1) - the catalytic core - and CF(0) - the membrane proton channel. CF(1) has five subunits: alpha(3), beta(3), gamma(1), delta(1), epsilon(1). CF(0) has three main subunits: a(1), b(2) and c(9-12). The alpha and beta chains form an alternating ring which encloses part of the gamma chain. CF(1) is attached to CF(0) by a central stalk formed by the gamma and epsilon chains, while a peripheral stalk is formed by the delta and b chains.

It is found in the cell membrane. The catalysed reaction is ATP + H2O + 4 H(+)(in) = ADP + phosphate + 5 H(+)(out). Its function is as follows. Produces ATP from ADP in the presence of a proton gradient across the membrane. The catalytic sites are hosted primarily by the beta subunits. The sequence is that of ATP synthase subunit beta from Rickettsia africae (strain ESF-5).